The sequence spans 312 residues: Polyhedral envelope protein (312 aa).

Belongs to the baculoviridae PE family.

It localises to the virion membrane. Its function is as follows. Major component of the polyhedra envelope. The protein is Polyhedral envelope protein of Lymantria dispar multicapsid nuclear polyhedrosis virus (LdMNPV).